The sequence spans 465 residues: ATP-dependent protease ATPase subunit HslU (465 aa).

Residues Val19 and 61–66 contribute to the ATP site; that span reads GVGKTE. Positions 153–175 are disordered; that stretch reads LFQSDGSDGDDETTEQDSHDEIR. ATP-binding residues include Asp279, Glu343, and Arg415.

This sequence belongs to the ClpX chaperone family. HslU subfamily. A double ring-shaped homohexamer of HslV is capped on each side by a ring-shaped HslU homohexamer. The assembly of the HslU/HslV complex is dependent on binding of ATP.

Its subcellular location is the cytoplasm. Functionally, ATPase subunit of a proteasome-like degradation complex; this subunit has chaperone activity. The binding of ATP and its subsequent hydrolysis by HslU are essential for unfolding of protein substrates subsequently hydrolyzed by HslV. HslU recognizes the N-terminal part of its protein substrates and unfolds these before they are guided to HslV for hydrolysis. This chain is ATP-dependent protease ATPase subunit HslU, found in Oceanobacillus iheyensis (strain DSM 14371 / CIP 107618 / JCM 11309 / KCTC 3954 / HTE831).